Consider the following 471-residue polypeptide: tRNA(Ile)-lysidine synthase (471 aa).

35–40 (SGGADS) contacts ATP.

This sequence belongs to the tRNA(Ile)-lysidine synthase family.

The protein resides in the cytoplasm. The catalysed reaction is cytidine(34) in tRNA(Ile2) + L-lysine + ATP = lysidine(34) in tRNA(Ile2) + AMP + diphosphate + H(+). Ligates lysine onto the cytidine present at position 34 of the AUA codon-specific tRNA(Ile) that contains the anticodon CAU, in an ATP-dependent manner. Cytidine is converted to lysidine, thus changing the amino acid specificity of the tRNA from methionine to isoleucine. This is tRNA(Ile)-lysidine synthase from Geobacter sulfurreducens (strain ATCC 51573 / DSM 12127 / PCA).